The chain runs to 236 residues: Small ribosomal subunit protein uS5 (236 aa).

The span at 1 to 10 (MTENNEKDIQ) shows a compositional bias: basic and acidic residues. The tract at residues 1–64 (MTENNEKDIQ…GRDGGREAEK (64 aa)) is disordered. Positions 11-27 (VTEAVAAPATETAAPAT) are enriched in low complexity. The segment covering 28 to 64 (TDDRRGGARRGERGDRGQGRGDRGGRGGRDGGREAEK) has biased composition (basic and acidic residues). An S5 DRBM domain is found at 67-130 (FVERVVTINR…EEAKKSFFRV (64 aa)).

This sequence belongs to the universal ribosomal protein uS5 family. Part of the 30S ribosomal subunit. Contacts proteins S4 and S8.

With S4 and S12 plays an important role in translational accuracy. Functionally, located at the back of the 30S subunit body where it stabilizes the conformation of the head with respect to the body. The polypeptide is Small ribosomal subunit protein uS5 (Arthrobacter sp. (strain FB24)).